The following is a 94-amino-acid chain: CRISPR-associated endoribonuclease Cas2 (94 aa).

Position 10 (Asp10) interacts with Mg(2+).

This sequence belongs to the CRISPR-associated endoribonuclease Cas2 protein family. In terms of assembly, homodimer, forms a heterotetramer with a Cas1 homodimer. Mg(2+) serves as cofactor.

Functionally, CRISPR (clustered regularly interspaced short palindromic repeat), is an adaptive immune system that provides protection against mobile genetic elements (viruses, transposable elements and conjugative plasmids). CRISPR clusters contain sequences complementary to antecedent mobile elements and target invading nucleic acids. CRISPR clusters are transcribed and processed into CRISPR RNA (crRNA). Functions as a ssRNA-specific endoribonuclease. Involved in the integration of spacer DNA into the CRISPR cassette. This chain is CRISPR-associated endoribonuclease Cas2, found in Leptospira interrogans serogroup Icterohaemorrhagiae serovar Lai (strain 56601).